Reading from the N-terminus, the 66-residue chain is Large ribosomal subunit protein uL29 (66 aa).

Belongs to the universal ribosomal protein uL29 family.

This Kosmotoga olearia (strain ATCC BAA-1733 / DSM 21960 / TBF 19.5.1) protein is Large ribosomal subunit protein uL29.